The chain runs to 435 residues: MNIVILGTQWGDEGKGKIVDMLTEDVAAVVRFQGGHNAGHTLIIDGEKTILRLIPSGILREGVLCLIGNGVVLSPPALMEEIEELNAKGIPVTERLRISSACNLLLPYHVALDKAREAELGTKAIGTTGRGIGPAYEDKVARRGIRAMDLLHPNQLLEKIKKATAYHNIQLEHYYHQTPLDYQSIYNQLMEFREKIKPMIGDVSALLGNLRRQNKHIIFEGAQGSLLDIDLGTYPYVTSSNTTAGSAATGSGFGPLYFDRVLGITKAYVTRVGAGPFPTELTNEEGKKMAKRGNEFGSVTGRPRRCGWFDVISMRRTIQINSLTGIVLTKLDVLDEFAKIHLCTAYRCDGEVVNEPPFDQSLLESCEPVYEEMPGWQTSTYGLTDYSEMPKEARNYISRLEELLGVPITIISTGPDRKHTIVRQAVFNQVITAKG.

GTP-binding positions include 11-17 and 39-41; these read GDEGKGK and GHT. Catalysis depends on Asp12, which acts as the Proton acceptor. Residues Asp12 and Gly39 each contribute to the Mg(2+) site. Residues 12-15, 37-40, Thr128, Arg142, Gln223, Thr238, and Arg302 contribute to the IMP site; these read DEGK and NAGH. The Proton donor role is filled by His40. 298–304 serves as a coordination point for substrate; the sequence is SVTGRPR. Residues Arg304, 330-332, and 412-414 contribute to the GTP site; these read KLD and STG.

This sequence belongs to the adenylosuccinate synthetase family. In terms of assembly, homodimer. Requires Mg(2+) as cofactor.

It localises to the cytoplasm. The catalysed reaction is IMP + L-aspartate + GTP = N(6)-(1,2-dicarboxyethyl)-AMP + GDP + phosphate + 2 H(+). Its pathway is purine metabolism; AMP biosynthesis via de novo pathway; AMP from IMP: step 1/2. In terms of biological role, plays an important role in the de novo pathway of purine nucleotide biosynthesis. Catalyzes the first committed step in the biosynthesis of AMP from IMP. This chain is Adenylosuccinate synthetase, found in Coxiella burnetii (strain Dugway 5J108-111).